We begin with the raw amino-acid sequence, 280 residues long: Putative pyruvate, phosphate dikinase regulatory protein (280 aa).

An ADP-binding site is contributed by 158–165; the sequence is GVSRTSKT.

The protein belongs to the pyruvate, phosphate/water dikinase regulatory protein family. PDRP subfamily.

It carries out the reaction N(tele)-phospho-L-histidyl/L-threonyl-[pyruvate, phosphate dikinase] + ADP = N(tele)-phospho-L-histidyl/O-phospho-L-threonyl-[pyruvate, phosphate dikinase] + AMP + H(+). The catalysed reaction is N(tele)-phospho-L-histidyl/O-phospho-L-threonyl-[pyruvate, phosphate dikinase] + phosphate + H(+) = N(tele)-phospho-L-histidyl/L-threonyl-[pyruvate, phosphate dikinase] + diphosphate. Functionally, bifunctional serine/threonine kinase and phosphorylase involved in the regulation of the pyruvate, phosphate dikinase (PPDK) by catalyzing its phosphorylation/dephosphorylation. The polypeptide is Putative pyruvate, phosphate dikinase regulatory protein (Lactobacillus johnsonii (strain CNCM I-12250 / La1 / NCC 533)).